The sequence spans 287 residues: 4-diphosphocytidyl-2-C-methyl-D-erythritol kinase (287 aa).

Lys12 is a catalytic residue. 94–104 provides a ligand contact to ATP; it reads PAQAGMGGGSS. Asp136 is an active-site residue.

The protein belongs to the GHMP kinase family. IspE subfamily.

It carries out the reaction 4-CDP-2-C-methyl-D-erythritol + ATP = 4-CDP-2-C-methyl-D-erythritol 2-phosphate + ADP + H(+). The protein operates within isoprenoid biosynthesis; isopentenyl diphosphate biosynthesis via DXP pathway; isopentenyl diphosphate from 1-deoxy-D-xylulose 5-phosphate: step 3/6. In terms of biological role, catalyzes the phosphorylation of the position 2 hydroxy group of 4-diphosphocytidyl-2C-methyl-D-erythritol. The protein is 4-diphosphocytidyl-2-C-methyl-D-erythritol kinase of Albidiferax ferrireducens (strain ATCC BAA-621 / DSM 15236 / T118) (Rhodoferax ferrireducens).